We begin with the raw amino-acid sequence, 591 residues long: V-type ATP synthase alpha chain (591 aa).

Residue Gly232 to Thr239 participates in ATP binding.

Belongs to the ATPase alpha/beta chains family.

It catalyses the reaction ATP + H2O + 4 H(+)(in) = ADP + phosphate + 5 H(+)(out). Its function is as follows. Produces ATP from ADP in the presence of a proton gradient across the membrane. The V-type alpha chain is a catalytic subunit. In Clostridium perfringens (strain SM101 / Type A), this protein is V-type ATP synthase alpha chain.